We begin with the raw amino-acid sequence, 341 residues long: UDP-glucuronic acid decarboxylase 5 (341 aa).

The segment at M1–N21 is disordered. D60–D85 lines the NAD(+) pocket. R169 is a substrate binding site. Y172 serves as the catalytic Proton acceptor. An NAD(+)-binding site is contributed by Y172–K176. N201 is a binding site for substrate. R213 serves as a coordination point for NAD(+). Substrate-binding positions include V214 to F218, Q231 to R238, and D298 to R302.

It belongs to the NAD(P)-dependent epimerase/dehydratase family. UDP-glucuronic acid decarboxylase subfamily. NAD(+) is required as a cofactor.

Its subcellular location is the cytoplasm. It carries out the reaction UDP-alpha-D-glucuronate + H(+) = UDP-alpha-D-xylose + CO2. Its pathway is nucleotide-sugar biosynthesis; UDP-alpha-D-xylose biosynthesis; UDP-alpha-D-xylose from UDP-alpha-D-glucuronate: step 1/1. Catalyzes the NAD-dependent decarboxylation of UDP-glucuronic acid to UDP-xylose. Necessary for the biosynthesis of the core tetrasaccharide in glycosaminoglycan biosynthesis. The chain is UDP-glucuronic acid decarboxylase 5 (UXS5) from Arabidopsis thaliana (Mouse-ear cress).